Consider the following 374-residue polypeptide: Guanine nucleotide-binding protein subunit alpha-15 (374 aa).

In terms of domain architecture, G-alpha spans 41–374 (GELKLLLLGP…ARYLDEINLL (334 aa)). The G1 motif stretch occupies residues 44-57 (KLLLLGPGESGKST). Residues 49–56 (GPGESGKS), 183–189 (LRSRMPT), 208–212 (DVGGQ), 277–280 (NKTD), and A346 each bind GTP. S56 serves as a coordination point for Mg(2+). The tract at residues 181–189 (DVLRSRMPT) is G2 motif. R186 carries the post-translational modification ADP-ribosylarginine; by cholera toxin. T189 contributes to the Mg(2+) binding site. The tract at residues 204–213 (LRIVDVGGQK) is G3 motif. A G4 motif region spans residues 273–280 (ILFLNKTD). Residues 344–349 (TCATDT) are G5 motif.

It belongs to the G-alpha family. G(q) subfamily. In terms of assembly, g proteins are composed of 3 units; alpha, beta and gamma. The alpha chain contains the guanine nucleotide binding site. As to expression, specifically expressed in hematopoietic cells. Expressed in epididymis (at protein level).

Functionally, guanine nucleotide-binding proteins (G proteins) are involved as modulators or transducers in various transmembrane signaling systems. This chain is Guanine nucleotide-binding protein subunit alpha-15 (GNA15), found in Homo sapiens (Human).